The primary structure comprises 5376 residues: Zonadhesin (5376 aa).

Residues 1–17 (MALPVWTLMLLVGAAWG) form the signal peptide. Residues 18–5310 (QEQVPAWRPN…TTRKKIEASS (5293 aa)) are Extracellular-facing. MAM domains lie at 45 to 210 (SKCD…TCNQ), 215 to 374 (QMCT…PCGE), and 377 to 542 (PQCD…PCRV). Asn339 and Asn499 each carry an N-linked (GlcNAc...) asparagine glycan. The segment at 547-1170 (EIPSSPLLPP…PTTGVSTTES (624 aa)) is 80 X heptapeptide repeats (approximate) (mucin-like domain). Disordered stretches follow at residues 553–579 (LLPP…TKAT) and 1037–1113 (TVPP…TVST). Low complexity predominate over residues 1052–1113 (TEVTTTPPEE…IASEETTVST (62 aa)). Positions 1171 to 1220 (CPPNAHIELCACPASCESPKPSCQPPCIPGCVCNPGFLFSNNQCINESSC) constitute a TIL 1 domain. N-linked (GlcNAc...) asparagine glycans are attached at residues Asn1216, Asn1239, and Asn1314. In terms of domain architecture, VWFC 1 spans 1227 to 1275 (KHYKPGEEWFTPNCTERCRCLPGSLMECQISQCGTHTVCQLKSDQYQCE). The VWFD 1 domain maps to 1280–1462 (ATCLVYGDLH…DKDWVSSRCQ (183 aa)). 2 disulfide bridges follow: Cys1282–Cys1417 and Cys1304–Cys1461. Residues 1555–1608 (CPKNSRYSLCAKPCPETCHPISTTQHCSDKCVEGCECDPGFILSGSECVPSSQC) form the TIL 2 domain. One can recognise a VWFC 2 domain in the interval 1609–1664 (GCTSFQGRYFKLQEQWFNPDCKEICTCESHNHILCKPWKCKAQEACSYKNGVLGCH). The VWFD 2 domain occupies 1669-1849 (ATCMVSGDPH…ILEASDPGCF (181 aa)). Disulfide bonds link Cys1671/Cys1809 and Cys1693/Cys1848. Residues Asn1814, Asn1908, and Asn1933 are each glycosylated (N-linked (GlcNAc...) asparagine). The TIL 3 domain maps to 1941–1995 (CPPRSSYNPCANSCPATCLTLSTPRDCPTLPCVEGCECQSGHILSGTTCVPLRQC). Residues 1996 to 2052 (GCSDQDGSYHLLGESWYTEKTCTTLCTCSAHSNITCSPTACKANHVCLRQEGLLRCA) form the VWFC 3 domain. Asn2028, Asn2111, Asn2142, and Asn2332 each carry an N-linked (GlcNAc...) asparagine glycan. Residues 2056–2239 (GECRISEDSQ…KDKSMDPNCQ (184 aa)) enclose the VWFD 3 domain. Cystine bridges form between Cys2058–Cys2200 and Cys2080–Cys2238. In terms of domain architecture, TIL 4 spans 2340-2398 (CPAHSHYTNCLPSCPPSCLDPDSRCEGSGHKVPATCREGCICQPDYVLLNDKCVLRSHC). The region spanning 2399–2454 (GCKDAQGVFIPAGKTWISEDCTQSCTCMKGSMRCWDFQCPPGTYCKNSNDGSSNCV) is the VWFC 4 domain. Positions 2460 to 2518 (CPAHSKFTDCLPPCHPSCSDPDGHCEGISTNAHSNCKEGCVCQPGYVLRNDKCVLRIEC) constitute a TIL 5 domain. The region spanning 2519–2574 (GCQHTQGGFIPAGKNWTSRGCSQSCDCMEGVIRCQNFQCPSGTYCQDIEDGTSNCA) is the VWFC 5 domain. Asn2533 and Asn2575 each carry an N-linked (GlcNAc...) asparagine glycan. In terms of domain architecture, TIL 6 spans 2580-2638 (CPAHSSFTNCLPPCQPSCSDPEGHCGGSTTKAPSACQEGCVCEPDYVVLNNKCVPRIEC). Residues 2639-2694 (GCKDAQGVLIPADKIWINKGCTQTCACVTGTIHCRDFQCPSGTYCKDIKDDASNCT) enclose the VWFC 6 domain. A glycan (N-linked (GlcNAc...) asparagine) is linked at Asn2692. Positions 2700-2758 (CPDHSLYTHCLPSCLLSCSDPDGLCRGTSPEAPSTCKEGCVCDPDYVLSNDKCVLRIEC) constitute a TIL 7 domain. The 56-residue stretch at 2759–2814 (GCKDAQGVLIPAGKTWINRGCTQSCSCMGGAIQCQNFKCPSEAYCQDMEDGNSNCT) folds into the VWFC 7 domain. Residue Asn2812 is glycosylated (N-linked (GlcNAc...) asparagine). Residues 2820-2878 (CPAHSHYTNCLPTCQPSCSDPDGHCEGSSTKAPSACKEGCVCEPDYVMLNNKCVPRIEC) form the TIL 8 domain. Positions 2879–2934 (GCKDTQGVLIPADKTWINRGCTQSCTCRGGAIQCQKYHCSSGTYCKDMEDDSSSCA) constitute a VWFC 8 domain. The TIL 9 domain maps to 2940 to 2998 (CPAHSHFTNCLPPCQPSCLDSEGHCEGSTTKAPSACQEGCVCEPDYVVLNNKCVPRIEC). One can recognise a VWFC 9 domain in the interval 2999–3054 (GCKDAQGVLIPADKTWINRGCTQSCTCKGGAIQCQKFQCPSETYCKDIEDGNSNCT). Asn3052, Asn3065, Asn3144, and Asn3172 each carry an N-linked (GlcNAc...) asparagine glycan. The 59-residue stretch at 3060–3118 (CPANSNFTSCLPSCQPSCSNTDVHCEGSSPNTLSSCREGCVCQSGYVLHNDKCILRNQC) folds into the TIL 10 domain. In terms of domain architecture, VWFC 10 spans 3119–3174 (GCKDAQGALIPEGKTWITSGCTQSCNCTGGAIQCQNFQCPLKTYCKDLKDGSSNCT). Residues 3180–3238 (CPAHSRYTNCLPSCPPLCLDPEGLCEGTSPKVPSTCREGCICQPGYLMHKNKCVLRIFC) form the TIL 11 domain. Residues 3239–3294 (GCKNTQGAFISADKTWISRGCTQSCTCPAGAIHCRNFKCPSGTYCKNGDNGSSNCT) enclose the VWFC 11 domain. 2 N-linked (GlcNAc...) asparagine glycosylation sites follow: Asn3288 and Asn3292. Residues 3300–3355 (CPTNSQFTDCLPSCVPSCSNRCEVTSPSVPSSCREGCLCNHGFVFSEDKCVPRTQC) form the TIL 12 domain. The VWFC 12 domain occupies 3356-3411 (GCKDARGAIIPAGKTWTSKGCTQSCACVEGNIQCQNFQCPPETYCKDNSEGSSTCT). The TIL 13 domain maps to 3417-3475 (CPAHTQYTSCLPSCLPSCLDPEGLCKDISPKVPSTCKEGCVCQSGYVLNSDKCVLRAEC). The 56-residue stretch at 3476 to 3531 (DCKDAQGALIPAGKTWTSPGCTQSCACMGGAVQCQSSQCPPGTYCKDNEDGNSNCA) folds into the VWFC 13 domain. Residues 3537–3595 (CPAHSLFTNCLPPCLPSCLDPDGLCKGASPKVPSTCKEGCICQSGYVLSNNKCLLRNRC) form the TIL 14 domain. The 56-residue stretch at 3596-3651 (GCKDAHGALIPEDKTWVSRGCTQSCVCTGGSIQCLSSQCPPGAYCKDNEDGSSNCA) folds into the VWFC 14 domain. Residues 3657–3715 (CPANSHYTDCFPPCPPSCSDPEGHCEASGPRVLSTCREGCLCNPGFVLDRDKCVPRVEC) enclose the TIL 15 domain. One can recognise a VWFC 15 domain in the interval 3716–3771 (GCKDAQGALIPSGKTWTSPGCTQSCACMGGVVQCQSSQCPPGTYCKDNEDGNSNCA). The TIL 16 domain occupies 3777–3835 (CPTHSNYTDCLPFCLPSCLDPSALCGGTSPKGPSTCKEGCVCQPGYVLDKDKCILKIEC). Residue Asn3782 is glycosylated (N-linked (GlcNAc...) asparagine). The 56-residue stretch at 3836–3891 (GCRDTQGAVIPAGKTWLSTGCIQSCACVEGTIQCQNFQCPPGTYCNHNNNCAKIPL) folds into the VWFC 16 domain. A TIL 17 domain is found at 3893 to 3951 (CPAHSHFTSCLPSCPPSCANLDGSCEQTSPKVPSTCKEGCLCQPGYFLNNGKCVLQTHC). Positions 3952 to 4007 (DCKDAEGGLVPAGKTWTSKDCTQSCACTGGAVQCQNFQCPLGTYCKDSGDGSSNCT) constitute a VWFC 17 domain. An N-linked (GlcNAc...) asparagine glycan is attached at Asn4005. Residues 4029–4087 (CPAHSHFTSCLPSCPPSCSNLDGSCVESNFKAPSVCKKGCICQPGYLLNNDKCVLRIQC) enclose the TIL 18 domain. In terms of domain architecture, VWFC 18 spans 4088–4143 (GCKDTQGGLIPAGRTWISSDCTKSCSCMGGIIQCRDFQCPPGTYCKESNDSSRTCA). A glycan (N-linked (GlcNAc...) asparagine) is linked at Asn4136. A TIL 19 domain is found at 4149–4207 (CPAHSHYTNCLPACSRSCTDLDGHCEGTSPKVPSPCKEGCLCQPGYVVHNHKCVLQIHC). In terms of domain architecture, VWFC 19 spans 4208-4262 (GCKDAQGGFVPAGKTWISRGCTQSCACVGGAVQCHNFTCPTGTQCQNSSCSKITV). 2 N-linked (GlcNAc...) asparagine glycosylation sites follow: Asn4243 and Asn4254. The region spanning 4264 to 4322 (CPAHSQYTTCLPSCLPSCFDPEGLCGGASPRAPSTCREGCVCEADYVLREDKCVLRTQC) is the TIL 20 domain. One can recognise a VWFC 20 domain in the interval 4323 to 4378 (GCKDAQGDLIPANKTWLTRGCAQKCTCKGGNIHCWNFKCPLGTECKDSVDGGSNCT). Residues Asn4335 and Asn4376 are each glycosylated (N-linked (GlcNAc...) asparagine). The region spanning 4384–4442 (CPAHSHHTYCLPSCIPSCSNVNDRCESTSLQRPSTCIEGCLCHSGFVFSKDKCVPRTQC) is the TIL 21 domain. The 56-residue stretch at 4443–4498 (GCKDSQGTLIPAGKNWITTGCSQRCTCTGGLVQCHDFQCPSGAECQDIEDGNSNCV) folds into the VWFC 21 domain. The TIL 22 domain maps to 4504–4562 (CPAHSHYSKCLPPCQPSCSDPDGHCEGTSPEAPSTCEEGCVCEPDYVLSNDKCVPSSEC). The VWFC 22 domain occupies 4563 to 4618 (GCKDAHGVLIPESKTWVSRGCTKNCTCKGGTVQCHDFSCPTGSRCLDNNEGNSNCV). The N-linked (GlcNAc...) asparagine glycan is linked to Asn4586. Positions 4624-4682 (CPAHSLYTNCLPSCLPSCSDPEGLCGGTSPEVPSTCKEGCICQSGYVLHKNKCMLRIHC) constitute a TIL 23 domain. Residues 4683 to 4738 (DCKDFQGSLIKTGQTWISSGCSKICTCKGGFFQCQSYKCPSGTQCEESEDGSSNCV) form the VWFC 23 domain. The region spanning 4744–4802 (CPANSLYTHCLPTCLPSCSNPDGRCEGTSHKAPSTCREGCVCQPGYLLNKDTCVHKNQC) is the TIL 24 domain. In terms of domain architecture, VWFC 24 spans 4803 to 4858 (GCKDIRGNIIPAGNTWISSDCTQSCACTDGVIQCQNFVCPSGSHCQYNEDGSSDCA). Residues 4863-5038 (ERCTIFGDPY…SWEVKAQHAF (176 aa)) form the VWFD 4 domain. Cys4865 and Cys5001 are disulfide-bonded. An N-linked (GlcNAc...) asparagine glycan is attached at Asn5136. In terms of domain architecture, TIL 25 spans 5150–5203 (CPANTVYQRCMTPCPASCAKFVTPKVCEGPCVEGCASLPGYIYSDTQSLPVTHC). A VWFC 25 domain is found at 5204–5258 (GCTADGIYYKLGDSFVTNDCSQHCTCASQGILLCEPYGCRAGESCMVANFTRGCF). The N-linked (GlcNAc...) asparagine glycan is linked to Asn5252. Residues 5259 to 5295 (QDSPCLQNPCHNDGRCEEQGATFICHCDFGYGGEFCT) enclose the EGF-like domain. 3 disulfides stabilise this stretch: Cys5263–Cys5274, Cys5268–Cys5283, and Cys5285–Cys5294. The chain crosses the membrane as a helical span at residues 5311 to 5337 (LVAILPGVLVMVLVPVLLPRVYVYMAT). Topologically, residues 5338–5376 (RTTMGRRRMKRKEKKLLRQSRLRLEDADVPEPTFKATEF) are cytoplasmic.

Probably forms covalent oligomers. As to expression, in testis, primarily in haploid spermatids.

The protein resides in the cell membrane. Functionally, binds in a species-specific manner to the zona pellucida of the egg. May be involved in gamete recognition and/or signaling. The sequence is that of Zonadhesin (Zan) from Mus musculus (Mouse).